The sequence spans 830 residues: Isethionate sulfite-lyase (830 aa).

The 670-residue stretch at 31–700 (KRVFKLLERF…VVSATPNGRV (670 aa)) folds into the PFL domain. 2-hydroxyethane-1-sulfonate contacts are provided by residues arginine 189, glutamine 193, 468 to 470 (CIE), and arginine 678. The Cysteine radical intermediate role is filled by cysteine 468. The active-site Proton acceptor is the glutamate 470. One can recognise a Glycine radical domain in the interval 707 to 830 (DGSSPSHGAD…LIARTGHDQM (124 aa)). Glycine 805 bears the Glycine radical mark.

This sequence belongs to the glycyl radical enzyme (GRE) family. In terms of assembly, homodimer. In terms of processing, requires the activating protein IslB to generate the key active site glycyl radical on Gly-805 that is involved in catalysis.

The enzyme catalyses 2-hydroxyethane-1-sulfonate = acetaldehyde + sulfite + H(+). It functions in the pathway organosulfur degradation; alkanesulfonate degradation. In terms of biological role, involved in an anaerobic respiration pathway that converts the sulfonate taurine (2-aminoethanesulfonate) to ammonia, acetate and sulfide. Catalyzes the radical-mediated C-S bond cleavage of isethionate (2-hydroxyethanesulfonate) to form sulfite and acetaldehyde. Is not able to use any alternate organosulfonate or (S)-1,2-propanediol or choline as a substrate, showing that this enzyme is highly specific for isethionate. The protein is Isethionate sulfite-lyase of Bilophila wadsworthia (strain 3_1_6).